The sequence spans 186 residues: dCTP deaminase, dUMP-forming (186 aa).

DCTP contacts are provided by residues 101–106 (RSSLGR), Asp-119, 127–129 (TLE), Gln-148, Tyr-162, and Gln-171. Catalysis depends on Glu-129, which acts as the Proton donor/acceptor.

This sequence belongs to the dCTP deaminase family. Homotrimer.

It carries out the reaction dCTP + 2 H2O = dUMP + NH4(+) + diphosphate. Its pathway is pyrimidine metabolism; dUMP biosynthesis; dUMP from dCTP: step 1/1. In terms of biological role, bifunctional enzyme that catalyzes both the deamination of dCTP to dUTP and the hydrolysis of dUTP to dUMP without releasing the toxic dUTP intermediate. The sequence is that of dCTP deaminase, dUMP-forming from Coprothermobacter proteolyticus (strain ATCC 35245 / DSM 5265 / OCM 4 / BT).